The following is a 125-amino-acid chain: Small ribosomal subunit protein uS12 (125 aa).

Aspartate 89 is subject to 3-methylthioaspartic acid.

Belongs to the universal ribosomal protein uS12 family. Part of the 30S ribosomal subunit. Contacts proteins S8 and S17. May interact with IF1 in the 30S initiation complex.

In terms of biological role, with S4 and S5 plays an important role in translational accuracy. Functionally, interacts with and stabilizes bases of the 16S rRNA that are involved in tRNA selection in the A site and with the mRNA backbone. Located at the interface of the 30S and 50S subunits, it traverses the body of the 30S subunit contacting proteins on the other side and probably holding the rRNA structure together. The combined cluster of proteins S8, S12 and S17 appears to hold together the shoulder and platform of the 30S subunit. This is Small ribosomal subunit protein uS12 from Cupriavidus metallidurans (strain ATCC 43123 / DSM 2839 / NBRC 102507 / CH34) (Ralstonia metallidurans).